The chain runs to 325 residues: Cell division protein ZipA (325 aa).

Topologically, residues 1-5 are periplasmic; that stretch reads MQELR. A helical membrane pass occupies residues 6 to 26; it reads LVLILVGALAIAALLFHGLWT. Residues 27-325 are Cytoplasmic-facing; the sequence is SRKETSSKFG…KQRVKVFCRK (299 aa).

The protein belongs to the ZipA family. Interacts with FtsZ via their C-terminal domains.

It is found in the cell inner membrane. In terms of biological role, essential cell division protein that stabilizes the FtsZ protofilaments by cross-linking them and that serves as a cytoplasmic membrane anchor for the Z ring. Also required for the recruitment to the septal ring of downstream cell division proteins. This is Cell division protein ZipA from Aliivibrio fischeri (strain MJ11) (Vibrio fischeri).